The following is a 949-amino-acid chain: Isoleucine--tRNA ligase (949 aa).

The short motif at 58 to 68 is the 'HIGH' region element; the sequence is PYANGDIHIGH. Glu-567 serves as a coordination point for L-isoleucyl-5'-AMP. The short motif at 608–612 is the 'KMSKS' region element; that stretch reads KMSKS. Residue Lys-611 participates in ATP binding. Zn(2+) is bound by residues Cys-912, Cys-915, Cys-932, and Cys-935.

This sequence belongs to the class-I aminoacyl-tRNA synthetase family. IleS type 1 subfamily. In terms of assembly, monomer. The cofactor is Zn(2+).

The protein localises to the cytoplasm. It carries out the reaction tRNA(Ile) + L-isoleucine + ATP = L-isoleucyl-tRNA(Ile) + AMP + diphosphate. Its function is as follows. Catalyzes the attachment of isoleucine to tRNA(Ile). As IleRS can inadvertently accommodate and process structurally similar amino acids such as valine, to avoid such errors it has two additional distinct tRNA(Ile)-dependent editing activities. One activity is designated as 'pretransfer' editing and involves the hydrolysis of activated Val-AMP. The other activity is designated 'posttransfer' editing and involves deacylation of mischarged Val-tRNA(Ile). The sequence is that of Isoleucine--tRNA ligase from Vibrio cholerae serotype O1 (strain ATCC 39315 / El Tor Inaba N16961).